Consider the following 180-residue polypeptide: Large ribosomal subunit protein uL6 (180 aa).

This sequence belongs to the universal ribosomal protein uL6 family. In terms of assembly, part of the 50S ribosomal subunit.

In terms of biological role, this protein binds to the 23S rRNA, and is important in its secondary structure. It is located near the subunit interface in the base of the L7/L12 stalk, and near the tRNA binding site of the peptidyltransferase center. This Borrelia garinii subsp. bavariensis (strain ATCC BAA-2496 / DSM 23469 / PBi) (Borreliella bavariensis) protein is Large ribosomal subunit protein uL6.